The following is a 315-amino-acid chain: Methenyltetrahydromethanopterin cyclohydrolase (315 aa).

It belongs to the MCH family.

It is found in the cytoplasm. It carries out the reaction 5,10-methenyl-5,6,7,8-tetrahydromethanopterin + H2O = N(5)-formyl-5,6,7,8-tetrahydromethanopterin + H(+). It functions in the pathway one-carbon metabolism; methanogenesis from CO(2); 5,10-methenyl-5,6,7,8-tetrahydromethanopterin from CO(2): step 3/3. Its function is as follows. Catalyzes the reversible interconversion of 5-formyl-H(4)MPT to methenyl-H(4)MPT(+). This Methanoculleus marisnigri (strain ATCC 35101 / DSM 1498 / JR1) protein is Methenyltetrahydromethanopterin cyclohydrolase.